Consider the following 395-residue polypeptide: Zinc-regulated GTPase metalloprotein activator 1F (395 aa).

Residues 1 to 22 (MLPAVGSVDEEEDPAEEDCPEL) form a disordered region. Acidic residues predominate over residues 8 to 20 (VDEEEDPAEEDCP). The psi-PxLVp motif motif lies at 17 to 24 (EDCPELVP). Residue 49 to 56 (GYLGAGKT) coordinates GTP. The Zn(2+) site is built by C107, C109, and C110. The short motif at 107–110 (CLCC) is the CXCC motif element. Residues 110-114 (CSVKD) and 203-206 (NKTD) contribute to the GTP site. One can recognise a CobW C-terminal domain in the interval 274–377 (IVTITFDVPG…ILKQLFIATV (104 aa)).

This sequence belongs to the SIMIBI class G3E GTPase family. ZNG1 subfamily.

It localises to the nucleus. It catalyses the reaction GTP + H2O = GDP + phosphate + H(+). Functionally, zinc chaperone that directly transfers zinc cofactor to target metalloproteins, thereby activating them. Catalyzes zinc insertion into the active site of methionine aminopeptidase METAP1, which function to cleave the initiator methionine from polypeptides during or after protein translation. Mechanistically, the N-terminal psi-PxLVp motif binds to the C6H2-type zinc finger of inactive form of METAP1. After formation of the docked complex, zinc is transferred from the CXCC motif in the GTPase domain of ZNG1F to the zinc binding site in the peptidase domain of METAP1 in a process requiring GTP hydrolysis. GTP/GDP exchange is required for release of active METAP1. This chain is Zinc-regulated GTPase metalloprotein activator 1F, found in Homo sapiens (Human).